A 417-amino-acid polypeptide reads, in one-letter code: Type II methyltransferase M.KpnI (417 aa).

This sequence belongs to the N(4)/N(6)-methyltransferase family.

It carries out the reaction a 2'-deoxyadenosine in DNA + S-adenosyl-L-methionine = an N(6)-methyl-2'-deoxyadenosine in DNA + S-adenosyl-L-homocysteine + H(+). A beta subtype methylase, recognizes the double-stranded sequence 5'-GGTACC-3', methylates A-4 on both strands, and protects the DNA from cleavage by the KpnI endonuclease. In Klebsiella pneumoniae, this protein is Type II methyltransferase M.KpnI.